Here is a 156-residue protein sequence, read N- to C-terminus: Small ribosomal subunit protein uS7 (156 aa).

It belongs to the universal ribosomal protein uS7 family. As to quaternary structure, part of the 30S ribosomal subunit. Contacts proteins S9 and S11.

Its function is as follows. One of the primary rRNA binding proteins, it binds directly to 16S rRNA where it nucleates assembly of the head domain of the 30S subunit. Is located at the subunit interface close to the decoding center, probably blocks exit of the E-site tRNA. This chain is Small ribosomal subunit protein uS7, found in Agrobacterium fabrum (strain C58 / ATCC 33970) (Agrobacterium tumefaciens (strain C58)).